Here is a 445-residue protein sequence, read N- to C-terminus: MKIFGTDGVRGKAGVKLTPMFVMRLGVAAGLYFKKHSKTNKILIGKDTRKSGYMVENALVSALTSIGYNVIQIGPMPTPAIAFLTEDMRCDAGIMISASHNPFEDNGIKFFNSYGYKLKEEEERAIEEIFHDERLLHSSYKVGESIGSAKRIDDVIGRYIVHLKHSFPKHLNLQSLRIVLDTANGAAYKVAPVVFSELGADVLVINDEPNGCNINEQCGALHPNQLSQEVKKYRADLGFAFDGDADRLVVVDNLGNIVHGDKLLGVLGVYQKSKNALSSQAIVATSMSNLALKEYLKSQDLELKHCAIGDKFVSECMRLNKANFGGEQSGHIIFSDYAKTGDGLVCALQVSALVLESKQVSSVALNPFELYPQNLVNLNVQKKPPLESLKGYSALLKELDQLEIRHLIRYSGTENKLRILLEAKDEKLLESKMQELKEFFEGHLC.

The Phosphoserine intermediate role is filled by serine 99. 4 residues coordinate Mg(2+): serine 99, aspartate 242, aspartate 244, and aspartate 246. Phosphoserine is present on serine 99.

It belongs to the phosphohexose mutase family. Mg(2+) serves as cofactor. In terms of processing, activated by phosphorylation.

The enzyme catalyses alpha-D-glucosamine 1-phosphate = D-glucosamine 6-phosphate. Functionally, catalyzes the conversion of glucosamine-6-phosphate to glucosamine-1-phosphate. This Helicobacter pylori (strain P12) protein is Phosphoglucosamine mutase.